Reading from the N-terminus, the 73-residue chain is UPF0435 protein OB1527 (73 aa).

The protein belongs to the UPF0435 family.

In Oceanobacillus iheyensis (strain DSM 14371 / CIP 107618 / JCM 11309 / KCTC 3954 / HTE831), this protein is UPF0435 protein OB1527.